The primary structure comprises 71 residues: Protein SlyX homolog (71 aa).

Residues 49-71 form a disordered region; sequence KIKESQSSSSMMSNEPEPPPPHY.

This sequence belongs to the SlyX family.

The sequence is that of Protein SlyX homolog from Pseudoalteromonas translucida (strain TAC 125).